We begin with the raw amino-acid sequence, 123 residues long: Large ribosomal subunit protein bL12 (123 aa).

Belongs to the bacterial ribosomal protein bL12 family. As to quaternary structure, homodimer. Part of the ribosomal stalk of the 50S ribosomal subunit. Forms a multimeric L10(L12)X complex, where L10 forms an elongated spine to which 2 to 4 L12 dimers bind in a sequential fashion. Binds GTP-bound translation factors.

Functionally, forms part of the ribosomal stalk which helps the ribosome interact with GTP-bound translation factors. Is thus essential for accurate translation. This is Large ribosomal subunit protein bL12 from Dehalococcoides mccartyi (strain ATCC BAA-2100 / JCM 16839 / KCTC 5957 / BAV1).